Here is a 182-residue protein sequence, read N- to C-terminus: Protein GrpE (182 aa).

The span at 1–17 (MEEKKRCEESEKIKEQE) shows a compositional bias: basic and acidic residues. Positions 1–33 (MEEKKRCEESEKIKEQENETLPNEDSPSMGKKV) are disordered.

It belongs to the GrpE family. In terms of assembly, homodimer.

The protein localises to the cytoplasm. Its function is as follows. Participates actively in the response to hyperosmotic and heat shock by preventing the aggregation of stress-denatured proteins, in association with DnaK and GrpE. It is the nucleotide exchange factor for DnaK and may function as a thermosensor. Unfolded proteins bind initially to DnaJ; upon interaction with the DnaJ-bound protein, DnaK hydrolyzes its bound ATP, resulting in the formation of a stable complex. GrpE releases ADP from DnaK; ATP binding to DnaK triggers the release of the substrate protein, thus completing the reaction cycle. Several rounds of ATP-dependent interactions between DnaJ, DnaK and GrpE are required for fully efficient folding. In Borrelia hermsii (strain HS1 / DAH), this protein is Protein GrpE.